A 278-amino-acid polypeptide reads, in one-letter code: 4-deoxy-L-threo-5-hexosulose-uronate ketol-isomerase (278 aa).

Zn(2+) contacts are provided by His196, His198, Glu203, and His245.

Belongs to the KduI family. The cofactor is Zn(2+).

The enzyme catalyses 5-dehydro-4-deoxy-D-glucuronate = 3-deoxy-D-glycero-2,5-hexodiulosonate. It functions in the pathway glycan metabolism; pectin degradation; 2-dehydro-3-deoxy-D-gluconate from pectin: step 4/5. Its function is as follows. Catalyzes the isomerization of 5-dehydro-4-deoxy-D-glucuronate to 3-deoxy-D-glycero-2,5-hexodiulosonate. The sequence is that of 4-deoxy-L-threo-5-hexosulose-uronate ketol-isomerase from Salmonella paratyphi A (strain ATCC 9150 / SARB42).